Consider the following 371-residue polypeptide: Glutamate 5-kinase (371 aa).

Residue K12 coordinates ATP. S52, D136, and N148 together coordinate substrate. ATP-binding positions include 168–169 and 210–216; these read SD and TGGMRTK. The PUA domain maps to 275 to 354; sequence QGEILVDEGA…EDIAEKFGYS (80 aa).

It belongs to the glutamate 5-kinase family.

It localises to the cytoplasm. The catalysed reaction is L-glutamate + ATP = L-glutamyl 5-phosphate + ADP. The protein operates within amino-acid biosynthesis; L-proline biosynthesis; L-glutamate 5-semialdehyde from L-glutamate: step 1/2. Catalyzes the transfer of a phosphate group to glutamate to form L-glutamate 5-phosphate. This chain is Glutamate 5-kinase, found in Idiomarina loihiensis (strain ATCC BAA-735 / DSM 15497 / L2-TR).